The primary structure comprises 145 residues: Deoxyuridine 5'-triphosphate nucleotidohydrolase (145 aa).

Residues 63-65, Gln76, and 80-82 contribute to the substrate site; these read RSG and TVD.

The protein belongs to the dUTPase family. Mg(2+) is required as a cofactor.

It catalyses the reaction dUTP + H2O = dUMP + diphosphate + H(+). It functions in the pathway pyrimidine metabolism; dUMP biosynthesis; dUMP from dCTP (dUTP route): step 2/2. In terms of biological role, this enzyme is involved in nucleotide metabolism: it produces dUMP, the immediate precursor of thymidine nucleotides and it decreases the intracellular concentration of dUTP so that uracil cannot be incorporated into DNA. The sequence is that of Deoxyuridine 5'-triphosphate nucleotidohydrolase from Chlamydia muridarum (strain MoPn / Nigg).